A 279-amino-acid polypeptide reads, in one-letter code: 1-(5-phosphoribosyl)-5-[(5-phosphoribosylamino)methylideneamino] imidazole-4-carboxamide isomerase (279 aa).

This sequence belongs to the HisA/HisF family.

Its subcellular location is the cytoplasm. The catalysed reaction is 1-(5-phospho-beta-D-ribosyl)-5-[(5-phospho-beta-D-ribosylamino)methylideneamino]imidazole-4-carboxamide = 5-[(5-phospho-1-deoxy-D-ribulos-1-ylimino)methylamino]-1-(5-phospho-beta-D-ribosyl)imidazole-4-carboxamide. It participates in amino-acid biosynthesis; L-histidine biosynthesis; L-histidine from 5-phospho-alpha-D-ribose 1-diphosphate: step 4/9. The chain is 1-(5-phosphoribosyl)-5-[(5-phosphoribosylamino)methylideneamino] imidazole-4-carboxamide isomerase (HIS6) from Candida albicans (Yeast).